The sequence spans 164 residues: Protein SprT (164 aa).

Positions 14 to 156 (QQAETFFKRT…LCRRCREPLV (143 aa)) constitute a SprT-like domain. His69 contacts Zn(2+). The active site involves Glu70. Residue His73 participates in Zn(2+) binding.

It belongs to the SprT family. Requires Zn(2+) as cofactor.

The protein localises to the cytoplasm. The chain is Protein SprT from Pseudomonas savastanoi pv. phaseolicola (strain 1448A / Race 6) (Pseudomonas syringae pv. phaseolicola (strain 1448A / Race 6)).